The chain runs to 475 residues: Gamma-aminobutyric acid receptor subunit gamma-2 (475 aa).

An N-terminal signal peptide occupies residues 1-39 (MSSPNIWSTGSSVYSTPVFSQKMTVWILLLLSLYPGFTS). At 40-275 (QKSDDDYEDY…FDLSRRMGYF (236 aa)) the chain is on the extracellular side. N-linked (GlcNAc...) asparagine glycosylation is found at Asn52 and Asn129. Cys190 and Cys204 form a disulfide bridge. Asn247 carries N-linked (GlcNAc...) asparagine glycosylation. The helical transmembrane segment at 276–296 (TIQTYIPCTLIVVLSWVSFWI) threads the bilayer. The Cytoplasmic segment spans residues 297–302 (NKDAVP). Residues 303 to 322 (ARTSLGITTVLTMTTLSTIA) traverse the membrane as a helical segment. Residues 323–334 (RKSLPKVSYVTA) lie on the Extracellular side of the membrane. The chain crosses the membrane as a helical span at residues 335-359 (MDLFVSVCFIFVFSALVEYGTLHYF). Over 360–451 (VSNRKPSKDK…IHIRIAKMDS (92 aa)) the chain is Cytoplasmic. Residues 433-450 (RTGAWRHGRIHIRIAKMD) form an interaction with GABARAP region. The chain crosses the membrane as a helical span at residues 452–472 (YARIFFPTAFCLFNLVYWVSY). The Extracellular segment spans residues 473 to 475 (LYL).

It belongs to the ligand-gated ion channel (TC 1.A.9) family. Gamma-aminobutyric acid receptor (TC 1.A.9.5) subfamily. GABRG2 sub-subfamily. Heteropentamer, formed by a combination of alpha (GABRA1-6), beta (GABRB1-3), gamma (GABRG1-3), delta (GABRD), epsilon (GABRE), rho (GABRR1-3), pi (GABRP) and theta (GABRQ) chains, each subunit exhibiting distinct physiological and pharmacological properties. Interacts with GABARAP. Interacts with KIF21B. Identified in a complex of 720 kDa composed of LHFPL4, NLGN2, GABRA1, GABRB2, GABRG2 and GABRB3. Interacts with LHFPL4. Interacts with SHISA7; interaction leads to the regulation of GABA(A) receptor trafficking, channel deactivation kinetics and pharmacology. Post-translationally, palmitoylated by ZDHHC3/GODZ; required for the accumulation of GABA(A) receptors at the postsynaptic membrane of inhibitory GABAergic synapses.

The protein localises to the postsynaptic cell membrane. It localises to the cell membrane. The protein resides in the cell projection. It is found in the dendrite. Its subcellular location is the cytoplasmic vesicle membrane. It catalyses the reaction chloride(in) = chloride(out). Its activity is regulated as follows. Allosterically activated by benzodiazepines. Activated by pentobarbital. Potentiated by etomidate, propofol, pregnanolone. Inhibited by the antagonist bicuculline. Inhibited by zinc ions. Potentiated by histamine. Functionally, gamma subunit of the heteropentameric ligand-gated chloride channel gated by gamma-aminobutyric acid (GABA), a major inhibitory neurotransmitter in the brain. GABA-gated chloride channels, also named GABA(A) receptors (GABAAR), consist of five subunits arranged around a central pore and contain GABA active binding site(s) located at the alpha and beta subunit interface(s). When activated by GABA, GABAARs selectively allow the flow of chloride anions across the cell membrane down their electrochemical gradient. Gamma-2/GABRG2-containing GABAARs are found at both synaptic and extrasynaptic sites. Chloride influx into the postsynaptic neuron following GABAAR opening decreases the neuron ability to generate a new action potential, thereby reducing nerve transmission. GABAARs containing alpha-1 and beta-2 or -3 subunits exhibit synaptogenic activity; the gamma-2 subunit being necessary but not sufficient to induce rapid synaptic contacts formation. Extrasynaptic gamma-2-containing receptors contribute to the tonic GABAergic inhibition. GABAARs function also as histamine receptor where histamine binds at the interface of two neighboring beta subunits and potentiates GABA response in a gamma-2 subunit-controlled manner. The protein is Gamma-aminobutyric acid receptor subunit gamma-2 of Homo sapiens (Human).